We begin with the raw amino-acid sequence, 226 residues long: PKHD-type hydroxylase PP_0862 (226 aa).

A Fe2OG dioxygenase domain is found at 78-178 (KVFPPLINCY…RYAAFFWTQS (101 aa)). 3 residues coordinate Fe cation: His-96, Asp-98, and His-159. Arg-169 is a 2-oxoglutarate binding site.

Fe(2+) serves as cofactor. Requires L-ascorbate as cofactor.

The sequence is that of PKHD-type hydroxylase PP_0862 from Pseudomonas putida (strain ATCC 47054 / DSM 6125 / CFBP 8728 / NCIMB 11950 / KT2440).